A 156-amino-acid chain; its full sequence is ATP synthase subunit b (156 aa).

A helical transmembrane segment spans residues 7–29 (LFAQMVVFLVLAWFTMKFVWPPL).

Belongs to the ATPase B chain family. As to quaternary structure, F-type ATPases have 2 components, F(1) - the catalytic core - and F(0) - the membrane proton channel. F(1) has five subunits: alpha(3), beta(3), gamma(1), delta(1), epsilon(1). F(0) has three main subunits: a(1), b(2) and c(10-14). The alpha and beta chains form an alternating ring which encloses part of the gamma chain. F(1) is attached to F(0) by a central stalk formed by the gamma and epsilon chains, while a peripheral stalk is formed by the delta and b chains.

The protein resides in the cell inner membrane. In terms of biological role, f(1)F(0) ATP synthase produces ATP from ADP in the presence of a proton or sodium gradient. F-type ATPases consist of two structural domains, F(1) containing the extramembraneous catalytic core and F(0) containing the membrane proton channel, linked together by a central stalk and a peripheral stalk. During catalysis, ATP synthesis in the catalytic domain of F(1) is coupled via a rotary mechanism of the central stalk subunits to proton translocation. Its function is as follows. Component of the F(0) channel, it forms part of the peripheral stalk, linking F(1) to F(0). This chain is ATP synthase subunit b, found in Burkholderia lata (strain ATCC 17760 / DSM 23089 / LMG 22485 / NCIMB 9086 / R18194 / 383).